The chain runs to 557 residues: Multidrug transporter FLR1 (557 aa).

N33, N48, and N106 each carry an N-linked (GlcNAc...) asparagine glycan. Residues 44 to 57 show a composition bias toward low complexity; that stretch reads SESSNMSFNSGSEE. A disordered region spans residues 44-67; the sequence is SESSNMSFNSGSEENSQEKSVEDL. The next 8 membrane-spanning stretches (helical) occupy residues 113 to 133, 149 to 169, 181 to 201, 204 to 224, 238 to 258, 271 to 291, 355 to 375, and 387 to 407; these read ALII…SSIY, VVGT…PIVF, LPVY…CALA, FAGL…ALST, LALV…LAPL, WIFW…TFFF, LYIA…PIVF, and GLAY…LLVF. N418 carries N-linked (GlcNAc...) asparagine glycosylation. Helical transmembrane passes span 426–446, 450–470, 484–506, and 521–541; these read TLIL…MFGW, VHWI…FNIF, YVAS…FPLF, and VAWG…IPFV.

This sequence belongs to the major facilitator superfamily.

The protein localises to the cell membrane. In terms of biological role, multidrug transporter that confers resistance to 5-flucytosine (5-FC) and clotrimazole. Also confers resistance to benomyl, but not 4-nitroquinoline-N-oxide, cycloheximide, or fluconazole. Plays direct roles in extrusion of 5-flucytosine and clotrimazole. In Candida glabrata (strain ATCC 2001 / BCRC 20586 / JCM 3761 / NBRC 0622 / NRRL Y-65 / CBS 138) (Yeast), this protein is Multidrug transporter FLR1.